A 268-amino-acid chain; its full sequence is Glucosamine-6-phosphate deaminase (268 aa).

The active-site Proton acceptor; for enolization step is aspartate 72. Residue aspartate 141 is the For ring-opening step of the active site. Histidine 143 acts as the Proton acceptor; for ring-opening step in catalysis. Catalysis depends on glutamate 148, which acts as the For ring-opening step.

Belongs to the glucosamine/galactosamine-6-phosphate isomerase family. NagB subfamily.

The enzyme catalyses alpha-D-glucosamine 6-phosphate + H2O = beta-D-fructose 6-phosphate + NH4(+). The protein operates within amino-sugar metabolism; N-acetylneuraminate degradation; D-fructose 6-phosphate from N-acetylneuraminate: step 5/5. With respect to regulation, allosterically activated by N-acetylglucosamine 6-phosphate (GlcNAc6P). Its function is as follows. Catalyzes the reversible isomerization-deamination of glucosamine 6-phosphate (GlcN6P) to form fructose 6-phosphate (Fru6P) and ammonium ion. This chain is Glucosamine-6-phosphate deaminase, found in Borreliella afzelii (strain PKo) (Borrelia afzelii).